The following is a 575-amino-acid chain: Proline--tRNA ligase (575 aa).

This sequence belongs to the class-II aminoacyl-tRNA synthetase family. ProS type 1 subfamily. Homodimer.

It localises to the cytoplasm. It carries out the reaction tRNA(Pro) + L-proline + ATP = L-prolyl-tRNA(Pro) + AMP + diphosphate. Catalyzes the attachment of proline to tRNA(Pro) in a two-step reaction: proline is first activated by ATP to form Pro-AMP and then transferred to the acceptor end of tRNA(Pro). As ProRS can inadvertently accommodate and process non-cognate amino acids such as alanine and cysteine, to avoid such errors it has two additional distinct editing activities against alanine. One activity is designated as 'pretransfer' editing and involves the tRNA(Pro)-independent hydrolysis of activated Ala-AMP. The other activity is designated 'posttransfer' editing and involves deacylation of mischarged Ala-tRNA(Pro). The misacylated Cys-tRNA(Pro) is not edited by ProRS. The chain is Proline--tRNA ligase from Saccharophagus degradans (strain 2-40 / ATCC 43961 / DSM 17024).